Here is a 680-residue protein sequence, read N- to C-terminus: Methionine--tRNA ligase (680 aa).

The 'HIGH' region motif lies at 15 to 25 (PYANGSIHLGH). Zn(2+) contacts are provided by C146, C149, C159, and C162. A 'KMSKS' region motif is present at residues 332–336 (KMSKS). Residue K335 participates in ATP binding. Positions 579–680 (DFAKVDMRIA…EGAQPGMRVM (102 aa)) constitute a tRNA-binding domain.

This sequence belongs to the class-I aminoacyl-tRNA synthetase family. MetG type 1 subfamily. As to quaternary structure, homodimer. It depends on Zn(2+) as a cofactor.

It localises to the cytoplasm. It carries out the reaction tRNA(Met) + L-methionine + ATP = L-methionyl-tRNA(Met) + AMP + diphosphate. Its function is as follows. Is required not only for elongation of protein synthesis but also for the initiation of all mRNA translation through initiator tRNA(fMet) aminoacylation. The protein is Methionine--tRNA ligase of Photobacterium profundum (strain SS9).